Here is a 525-residue protein sequence, read N- to C-terminus: Putative ribose/galactose/methyl galactoside import ATP-binding protein (525 aa).

The segment covering 1–15 has biased composition (polar residues); sequence MFGSATANPPAQRNL. The disordered stretch occupies residues 1–23; the sequence is MFGSATANPPAQRNLPSGDGDGG. ABC transporter domains are found at residues 33–269 and 279–523; these read LEIS…VGRE and KPAG…SGHK. Residue 65 to 72 coordinates ATP; sequence GENGAGKS.

This sequence belongs to the ABC transporter superfamily. Carbohydrate importer 2 (CUT2) (TC 3.A.1.2) family.

Its subcellular location is the cell inner membrane. The enzyme catalyses D-ribose(out) + ATP + H2O = D-ribose(in) + ADP + phosphate + H(+). It carries out the reaction D-galactose(out) + ATP + H2O = D-galactose(in) + ADP + phosphate + H(+). In terms of biological role, part of an ABC transporter complex involved in carbohydrate import. Could be involved in ribose, galactose and/or methyl galactoside import. Responsible for energy coupling to the transport system. The sequence is that of Putative ribose/galactose/methyl galactoside import ATP-binding protein from Pseudomonas syringae pv. syringae (strain B728a).